Consider the following 308-residue polypeptide: Putative ankyrin repeat protein R835 (308 aa).

6 ANK repeats span residues 100–129 (DINE…NIDL), 152–181 (PMNK…YVDF), 190–217 (SEYT…GANY), 218–247 (KSSY…DLEK), 249–277 (GLRS…EIDY), and 279–305 (YYIY…SKQI).

The sequence is that of Putative ankyrin repeat protein R835 from Acanthamoeba polyphaga (Amoeba).